The following is a 223-amino-acid chain: Ribonuclease 3 (223 aa).

The 123-residue stretch at 3-125 (LERLQKKLGY…IIAAIYLDAG (123 aa)) folds into the RNase III domain. Mg(2+) is bound at residue glutamate 38. Aspartate 42 is a catalytic residue. Positions 111 and 114 each coordinate Mg(2+). Residue glutamate 114 is part of the active site. Residues 152–222 (DPKTRLQEFL…AEQVLAKLTT (71 aa)) enclose the DRBM domain.

It belongs to the ribonuclease III family. Homodimer. Requires Mg(2+) as cofactor.

It localises to the cytoplasm. It catalyses the reaction Endonucleolytic cleavage to 5'-phosphomonoester.. In terms of biological role, digests double-stranded RNA. Involved in the processing of primary rRNA transcript to yield the immediate precursors to the large and small rRNAs (23S and 16S). Processes some mRNAs, and tRNAs when they are encoded in the rRNA operon. Processes pre-crRNA and tracrRNA of type II CRISPR loci if present in the organism. The polypeptide is Ribonuclease 3 (Actinobacillus pleuropneumoniae serotype 3 (strain JL03)).